The primary structure comprises 484 residues: 6-phosphogluconate dehydrogenase, decarboxylating (484 aa).

NADP(+)-binding positions include 11 to 16, 34 to 36, 76 to 78, and Asn-104; these read GLAVMG, NRT, and VRA. Residues Asn-104 and 130–132 contribute to the substrate site; that span reads SGG. The active-site Proton acceptor is Lys-185. Position 188–189 (188–189) interacts with substrate; sequence HN. Glu-192 serves as the catalytic Proton donor. The substrate site is built by Tyr-193, Lys-262, Arg-289, Arg-447, and His-453.

The protein belongs to the 6-phosphogluconate dehydrogenase family. As to quaternary structure, homodimer.

It catalyses the reaction 6-phospho-D-gluconate + NADP(+) = D-ribulose 5-phosphate + CO2 + NADPH. Its pathway is carbohydrate degradation; pentose phosphate pathway; D-ribulose 5-phosphate from D-glucose 6-phosphate (oxidative stage): step 3/3. Functionally, catalyzes the oxidative decarboxylation of 6-phosphogluconate to ribulose 5-phosphate and CO(2), with concomitant reduction of NADP to NADPH. This is 6-phosphogluconate dehydrogenase, decarboxylating (gnd) from Haemophilus influenzae (strain ATCC 51907 / DSM 11121 / KW20 / Rd).